Here is a 217-residue protein sequence, read N- to C-terminus: Uracil-DNA glycosylase (217 aa).

Residue aspartate 62 is the Proton acceptor of the active site.

It belongs to the uracil-DNA glycosylase (UDG) superfamily. UNG family.

The protein localises to the cytoplasm. It catalyses the reaction Hydrolyzes single-stranded DNA or mismatched double-stranded DNA and polynucleotides, releasing free uracil.. In terms of biological role, excises uracil residues from the DNA which can arise as a result of misincorporation of dUMP residues by DNA polymerase or due to deamination of cytosine. This chain is Uracil-DNA glycosylase, found in Streptococcus pyogenes serotype M49 (strain NZ131).